Consider the following 217-residue polypeptide: UPF0502 protein ASA_1460 (217 aa).

The protein belongs to the UPF0502 family.

In Aeromonas salmonicida (strain A449), this protein is UPF0502 protein ASA_1460.